The following is a 159-amino-acid chain: MKRGLTVAVAGAAILVAGLSGCSSNKSTTGSGETTTAAGTTASPGAASGPKVVIDGKDQNVTGSVVCTTAAGNVNIAIGGAATGIAAVLTDGNPPEVKSVGLGNVNGVTLGYTSGTGQGNASATKDGSHYKITGTATGVDMANPMSPVNKSFEIEVTSS.

The signal sequence occupies residues 1-21; the sequence is MKRGLTVAVAGAAILVAGLSG. Cysteine 22 carries N-palmitoyl cysteine lipidation. Cysteine 22 carries the S-diacylglycerol cysteine lipid modification. Residues 24 to 51 form a disordered region; it reads SNKSTTGSGETTTAAGTTASPGAASGPK. Low complexity predominate over residues 27–49; that stretch reads STTGSGETTTAAGTTASPGAASG.

Belongs to the mycobacterial 19 kDa antigen family. In terms of processing, modified by Lgt on Cys-22 with an S-linked diacylglycerol with a mixture of C16, C18 and C19 fatty acids, signal peptide is removed by LspA, modifed by Lnt with an amide-linked mixture of C16 and C19 fatty acids.

The protein resides in the cell membrane. Functionally, might be involved in ligand transport. A host TLR2 agonist, modifies host gene expression in response to pathogen. This chain is Lipoprotein LpqH (lpqH), found in Mycobacterium tuberculosis (strain CDC 1551 / Oshkosh).